Consider the following 361-residue polypeptide: Eukaryotic translation initiation factor 3 subunit F (361 aa).

The segment at Met1–Leu86 is disordered. Ala2 is modified (N-acetylalanine). 2 stretches are compositionally biased toward pro residues: residues Ser9–Ala20 and Val30–Ala40. Low complexity predominate over residues Pro41 to Ala78. Ser50 carries the post-translational modification Phosphoserine; by CDK11; in vitro. One can recognise an MPN domain in the interval Val96–Gly226. Lys242 carries the N6-acetyllysine modification. Ser262 carries the post-translational modification Phosphoserine.

This sequence belongs to the eIF-3 subunit F family. In terms of assembly, component of the eukaryotic translation initiation factor 3 (eIF-3) complex, which is composed of 13 subunits: EIF3A, EIF3B, EIF3C, EIF3D, EIF3E, EIF3F, EIF3G, EIF3H, EIF3I, EIF3J, EIF3K, EIF3L and EIF3M. The eIF-3 complex appears to include 3 stable modules: module A is composed of EIF3A, EIF3B, EIF3G and EIF3I; module B is composed of EIF3F, EIF3H, and EIF3M; and module C is composed of EIF3C, EIF3D, EIF3E, EIF3K and EIF3L. EIF3C of module C binds EIF3B of module A and EIF3H of module B, thereby linking the three modules. EIF3J is a labile subunit that binds to the eIF-3 complex via EIF3B. The eIF-3 complex interacts with RPS6KB1 under conditions of nutrient depletion. Mitogenic stimulation leads to binding and activation of a complex composed of MTOR and RPTOR, leading to phosphorylation and release of RPS6KB1 and binding of EIF4B to eIF-3. Interacts with RNF139; the interaction leads to protein translation inhibitions in a ubiquitination-dependent manner. Interacts with DTX1, the interaction is required for deubiquitinating activity towards NOTCH1. In terms of processing, phosphorylation is enhanced upon serum stimulation. Phosphorylated during apoptosis by caspase-processed CDK11.

The protein resides in the cytoplasm. It carries out the reaction Thiol-dependent hydrolysis of ester, thioester, amide, peptide and isopeptide bonds formed by the C-terminal Gly of ubiquitin (a 76-residue protein attached to proteins as an intracellular targeting signal).. In terms of biological role, component of the eukaryotic translation initiation factor 3 (eIF-3) complex, which is required for several steps in the initiation of protein synthesis. The eIF-3 complex associates with the 40S ribosome and facilitates the recruitment of eIF-1, eIF-1A, eIF-2:GTP:methionyl-tRNAi and eIF-5 to form the 43S pre-initiation complex (43S PIC). The eIF-3 complex stimulates mRNA recruitment to the 43S PIC and scanning of the mRNA for AUG recognition. The eIF-3 complex is also required for disassembly and recycling of post-termination ribosomal complexes and subsequently prevents premature joining of the 40S and 60S ribosomal subunits prior to initiation. The eIF-3 complex specifically targets and initiates translation of a subset of mRNAs involved in cell proliferation, including cell cycling, differentiation and apoptosis, and uses different modes of RNA stem-loop binding to exert either translational activation or repression. Deubiquitinates activated NOTCH1, promoting its nuclear import, thereby acting as a positive regulator of Notch signaling. The sequence is that of Eukaryotic translation initiation factor 3 subunit F from Pan troglodytes (Chimpanzee).